A 140-amino-acid polypeptide reads, in one-letter code: Small ribosomal subunit protein uS12 (140 aa).

Asp-102 carries the post-translational modification 3-methylthioaspartic acid.

The protein belongs to the universal ribosomal protein uS12 family. As to quaternary structure, part of the 30S ribosomal subunit. Contacts proteins S8 and S17. May interact with IF1 in the 30S initiation complex.

Its function is as follows. With S4 and S5 plays an important role in translational accuracy. Interacts with and stabilizes bases of the 16S rRNA that are involved in tRNA selection in the A site and with the mRNA backbone. Located at the interface of the 30S and 50S subunits, it traverses the body of the 30S subunit contacting proteins on the other side and probably holding the rRNA structure together. The combined cluster of proteins S8, S12 and S17 appears to hold together the shoulder and platform of the 30S subunit. This Geobacillus sp. (strain WCH70) protein is Small ribosomal subunit protein uS12.